The sequence spans 466 residues: Ribulose bisphosphate carboxylase large chain (466 aa).

K5 bears the N6,N6,N6-trimethyllysine mark. Substrate-binding residues include N114 and T164. K166 serves as the catalytic Proton acceptor. K168 provides a ligand contact to substrate. Residues K192, D194, and E195 each coordinate Mg(2+). Position 192 is an N6-carboxylysine (K192). H285 acts as the Proton acceptor in catalysis. Substrate is bound by residues R286, H318, and S370.

It belongs to the RuBisCO large chain family. Type I subfamily. Heterohexadecamer of 8 large chains and 8 small chains; disulfide-linked. The disulfide link is formed within the large subunit homodimers. Mg(2+) is required as a cofactor. Post-translationally, the disulfide bond which can form in the large chain dimeric partners within the hexadecamer appears to be associated with oxidative stress and protein turnover.

It localises to the plastid. The protein resides in the chloroplast. The enzyme catalyses 2 (2R)-3-phosphoglycerate + 2 H(+) = D-ribulose 1,5-bisphosphate + CO2 + H2O. It carries out the reaction D-ribulose 1,5-bisphosphate + O2 = 2-phosphoglycolate + (2R)-3-phosphoglycerate + 2 H(+). Functionally, ruBisCO catalyzes two reactions: the carboxylation of D-ribulose 1,5-bisphosphate, the primary event in carbon dioxide fixation, as well as the oxidative fragmentation of the pentose substrate in the photorespiration process. Both reactions occur simultaneously and in competition at the same active site. The chain is Ribulose bisphosphate carboxylase large chain from Saururus cernuus (Lizard's tail).